The primary structure comprises 3326 residues: Protein unc-80 homolog (3326 aa).

A compositionally biased stretch (polar residues) spans 152–164; the sequence is IENQGSPGQPCRS. Disordered stretches follow at residues 152 to 178, 243 to 267, 283 to 317, and 450 to 469; these read IENQGSPGQPCRSSSHDEEENNRRKTF, KRSSPINSQSQTCESPNQDTRQQGE, PKATISGCHQGNSFDGSLSSQTSQERGPSHSRASL, and RKEDRERKGSIPFHHTGKRR. S257 is subject to Phosphoserine. The segment covering 283 to 308 has biased composition (polar residues); the sequence is PKATISGCHQGNSFDGSLSSQTSQER. Phosphoserine is present on S526. Disordered stretches follow at residues 536–560, 697–785, 967–1076, 1405–1430, and 1469–1516; these read LSARHSHSHHTLVSDLPDHSNSHGE, RKKS…DNIP, GKKV…SRRI, EDSKDSLHSSSHTIKSDAGAEEKKVP, and SSKL…LSNA. Composition is skewed to basic and acidic residues over residues 551–560 and 699–713; these read LPDHSNSHGE and KSENKENESVEKRPS. The span at 723–737 shows a compositional bias: low complexity; it reads SSSSTSGFGAPSASG. Residues 738–770 are compositionally biased toward gly residues; that stretch reads AGDGGGEEGGGGDGGGGGGGGDGGGGGGGGGGP. The segment covering 772–783 has biased composition (basic and acidic residues); that stretch reads EKNEKNQEKDDN. The segment covering 1038–1055 has biased composition (low complexity); sequence SQSAASDTSSQSEQDTSE. The segment covering 1418 to 1429 has biased composition (basic and acidic residues); the sequence is IKSDAGAEEKKV. A run of 2 helical transmembrane segments spans residues 2336-2356 and 2466-2486; these read PFVLQLFASVAPLLEFPDAAN and IAATAALATSLQALLYSVEVL. Positions 2493-2515 are disordered; the sequence is PQMSRSDQGHKGTTTANHTMSSG. Transmembrane regions (helical) follow at residues 2853 to 2873 and 2899 to 2919; these read GLAESTSQAAYLALKVILVCF and LALWDFLDFIVRTRIPIFVLL. The segment covering 3010-3032 has biased composition (polar residues); sequence NTGTGTVWEQDSEPSQQASQDTL. The disordered stretch occupies residues 3010–3052; that stretch reads NTGTGTVWEQDSEPSQQASQDTLSRTDEEDEENDSVSMPSVVS. Residue S3110 is modified to Phosphoserine. Disordered stretches follow at residues 3122–3222, 3236–3271, and 3296–3326; these read LQQP…VLTS, PKQSEPLLAEEGEKKEDEEIQGATAHCPLSTQLSDP, and NGTENPLLSSQFTFTPPELGDTDSALDESHV. Basic residues predominate over residues 3127-3136; it reads GRKRGLRQLR. Residues 3157–3168 are compositionally biased toward polar residues; it reads LSTTRRSIQPKT. Positions 3298–3309 are enriched in polar residues; it reads TENPLLSSQFTF. Acidic residues predominate over residues 3315-3326; sequence GDTDSALDESHV.

Belongs to the unc-80 family. In terms of assembly, NALCN complex consists of NALCN and auxiliary subunits, UNC79, UNC80 and NACL1. These auxiliary subunits are essential for the NALCN complex function. Interacts (via N-terminus half) with NALCN; this interaction facilitates NALCN surface localization. Interacts (via C-terminus) with UNC79. UNC80 bridges NALCN to UNC79. Post-translationally, phosphorylated on tyrosine residues. Expressed almost exclusively in the brain. Expressed in hippocampus and ventral tegmental area neurons.

It is found in the cell membrane. Its subcellular location is the cell projection. The protein resides in the dendrite. Its function is as follows. Auxiliary subunit of the NALCN sodium channel complex. The NALCN sodium channel complex is a voltage-gated ion channel responsible for the resting Na(+) permeability that controls neuronal excitability. This complex is activated by neuropeptides substance P, neurotensin. In addition, the channel is inhibited by extracellular Ca(2+) through the Ca(2+)-sensing receptor. UNC80 is essential for NALCN sensitivity to extracellular calcium. The sequence is that of Protein unc-80 homolog (Unc80) from Mus musculus (Mouse).